A 160-amino-acid polypeptide reads, in one-letter code: 2-C-methyl-D-erythritol 2,4-cyclodiphosphate synthase (160 aa).

D11 and H13 together coordinate a divalent metal cation. 4-CDP-2-C-methyl-D-erythritol 2-phosphate-binding positions include 11-13 (DVH) and 37-38 (HS). A divalent metal cation is bound at residue H45. 4-CDP-2-C-methyl-D-erythritol 2-phosphate is bound by residues 59–61 (DIG) and R145.

This sequence belongs to the IspF family. As to quaternary structure, homotrimer. A divalent metal cation is required as a cofactor.

The catalysed reaction is 4-CDP-2-C-methyl-D-erythritol 2-phosphate = 2-C-methyl-D-erythritol 2,4-cyclic diphosphate + CMP. The protein operates within isoprenoid biosynthesis; isopentenyl diphosphate biosynthesis via DXP pathway; isopentenyl diphosphate from 1-deoxy-D-xylulose 5-phosphate: step 4/6. Functionally, involved in the biosynthesis of isopentenyl diphosphate (IPP) and dimethylallyl diphosphate (DMAPP), two major building blocks of isoprenoid compounds. Catalyzes the conversion of 4-diphosphocytidyl-2-C-methyl-D-erythritol 2-phosphate (CDP-ME2P) to 2-C-methyl-D-erythritol 2,4-cyclodiphosphate (ME-CPP) with a corresponding release of cytidine 5-monophosphate (CMP). The protein is 2-C-methyl-D-erythritol 2,4-cyclodiphosphate synthase of Neisseria meningitidis serogroup B (strain ATCC BAA-335 / MC58).